Reading from the N-terminus, the 216-residue chain is SPbeta prophage-derived uncharacterized protein YomX (216 aa).

This chain is SPbeta prophage-derived uncharacterized protein YomX (yomX), found in Bacillus subtilis (strain 168).